The primary structure comprises 152 residues: Large ribosomal subunit protein bL9 (152 aa).

This sequence belongs to the bacterial ribosomal protein bL9 family.

In terms of biological role, binds to the 23S rRNA. This Mycobacterium avium (strain 104) protein is Large ribosomal subunit protein bL9.